Consider the following 450-residue polypeptide: UDP-N-acetylmuramoylalanine--D-glutamate ligase (450 aa).

119-125 (GSNGKTT) is a binding site for ATP.

This sequence belongs to the MurCDEF family.

The protein resides in the cytoplasm. It carries out the reaction UDP-N-acetyl-alpha-D-muramoyl-L-alanine + D-glutamate + ATP = UDP-N-acetyl-alpha-D-muramoyl-L-alanyl-D-glutamate + ADP + phosphate + H(+). It participates in cell wall biogenesis; peptidoglycan biosynthesis. In terms of biological role, cell wall formation. Catalyzes the addition of glutamate to the nucleotide precursor UDP-N-acetylmuramoyl-L-alanine (UMA). The polypeptide is UDP-N-acetylmuramoylalanine--D-glutamate ligase (Bacillus cereus (strain G9842)).